Reading from the N-terminus, the 345-residue chain is MKLHAPSFWWQKASFPALALWPLSFLYGRIAARRMRGSSAYAPAVPVICIGNVTLGGAGKTPTALALAKAALAMGLKPGFLSRGYGGTVRRPTLVDPGHHTAKDVGDEPLLLASVAPTVVASRRRDGARELERQGIDLIIMDDGFQSAQIRIDCAVVVTDSYKGDGNGFVFPAGPLRAPLAIQFQKLDMLLVVGKGDAAIPMVRRGARMGKPVLTAQLHPLPGPNLRGQRVLAYAGIADPEKFYRTLRELGADIVVARGFGDHQPLSAAAIAELIEEAEAKNLSLVTTAKDQARLRGSRRGGAGQDRAQELLAKSTVIEIEMIFDDPAVPARVIDQAQDRFRRSR.

Residue 54 to 61 (TLGGAGKT) coordinates ATP.

It belongs to the LpxK family.

It catalyses the reaction a lipid A disaccharide + ATP = a lipid IVA + ADP + H(+). It participates in glycolipid biosynthesis; lipid IV(A) biosynthesis; lipid IV(A) from (3R)-3-hydroxytetradecanoyl-[acyl-carrier-protein] and UDP-N-acetyl-alpha-D-glucosamine: step 6/6. Its function is as follows. Transfers the gamma-phosphate of ATP to the 4'-position of a tetraacyldisaccharide 1-phosphate intermediate (termed DS-1-P) to form tetraacyldisaccharide 1,4'-bis-phosphate (lipid IVA). This chain is Tetraacyldisaccharide 4'-kinase, found in Allorhizobium ampelinum (strain ATCC BAA-846 / DSM 112012 / S4) (Agrobacterium vitis (strain S4)).